The chain runs to 147 residues: Large ribosomal subunit protein uL13 (147 aa).

This sequence belongs to the universal ribosomal protein uL13 family. Part of the 50S ribosomal subunit.

In terms of biological role, this protein is one of the early assembly proteins of the 50S ribosomal subunit, although it is not seen to bind rRNA by itself. It is important during the early stages of 50S assembly. The sequence is that of Large ribosomal subunit protein uL13 from Lactobacillus johnsonii (strain CNCM I-12250 / La1 / NCC 533).